The chain runs to 346 residues: UDP-N-acetylenolpyruvoylglucosamine reductase (346 aa).

The 172-residue stretch at 18–189 (LHAQARAFIA…VSVVFALKTH (172 aa)) folds into the FAD-binding PCMH-type domain. The active site involves Arg-165. Ser-240 acts as the Proton donor in catalysis. The active site involves Glu-336.

Belongs to the MurB family. It depends on FAD as a cofactor.

The protein localises to the cytoplasm. It catalyses the reaction UDP-N-acetyl-alpha-D-muramate + NADP(+) = UDP-N-acetyl-3-O-(1-carboxyvinyl)-alpha-D-glucosamine + NADPH + H(+). It functions in the pathway cell wall biogenesis; peptidoglycan biosynthesis. In terms of biological role, cell wall formation. The polypeptide is UDP-N-acetylenolpyruvoylglucosamine reductase (Neisseria gonorrhoeae (strain ATCC 700825 / FA 1090)).